Reading from the N-terminus, the 63-residue chain is SERF-like protein C1705.02 (63 aa).

Residues 1-13 (MSRGNQRDVDRAR) show a composition bias toward basic and acidic residues. Residues 1 to 63 (MSRGNQRDVD…EANGGSKGKK (63 aa)) form a disordered region. The segment covering 14 to 24 (NLKKSQASKKK) has biased composition (basic residues). The span at 25–35 (QAGDPTKRLEA) shows a compositional bias: basic and acidic residues.

The protein belongs to the SERF family.

The protein localises to the cytoplasm. The protein resides in the nucleus. It is found in the nucleolus. This chain is SERF-like protein C1705.02, found in Schizosaccharomyces pombe (strain 972 / ATCC 24843) (Fission yeast).